Reading from the N-terminus, the 386-residue chain is Ribosomal RNA small subunit methyltransferase H (386 aa).

Residues 97–99 (GGH), aspartate 116, tyrosine 143, aspartate 167, and glutamine 174 contribute to the S-adenosyl-L-methionine site.

This sequence belongs to the methyltransferase superfamily. RsmH family.

It localises to the cytoplasm. It catalyses the reaction cytidine(1402) in 16S rRNA + S-adenosyl-L-methionine = N(4)-methylcytidine(1402) in 16S rRNA + S-adenosyl-L-homocysteine + H(+). Functionally, specifically methylates the N4 position of cytidine in position 1402 (C1402) of 16S rRNA. The sequence is that of Ribosomal RNA small subunit methyltransferase H from Mycobacterium avium (strain 104).